The sequence spans 293 residues: MIISVPATSANLGPGFDTLGLALDLRNIVKIKKSRFFSISIKGEGANNVRLKGNNLFISIFNEHYRKLVGKTDKFRFTFINKIPLSRGLGSSSAVIVSAIAAAYAMAGVAIPREKLLNLALIYEPHPDNITPAVMGGFNVAVVENNKVYSLKKEIPQSLKAVVVIPNRPISTAHSRTRLPKRFAMSDVVYNVSRSSLLTAAFFSENWEMLRVASMDKLHQDIRMRGLPELFELQKLALQKGALMSTLSGSGSTFFNLCYESKAKELAKVLKDRFAKYQVKILDFDNKGLIIEE.

84 to 94 (PLSRGLGSSSA) contacts ATP.

This sequence belongs to the GHMP kinase family. Homoserine kinase subfamily.

The protein resides in the cytoplasm. The catalysed reaction is L-homoserine + ATP = O-phospho-L-homoserine + ADP + H(+). The protein operates within amino-acid biosynthesis; L-threonine biosynthesis; L-threonine from L-aspartate: step 4/5. Its function is as follows. Catalyzes the ATP-dependent phosphorylation of L-homoserine to L-homoserine phosphate. This chain is Homoserine kinase, found in Nitratiruptor sp. (strain SB155-2).